The sequence spans 1275 residues: Probable Rho-type GTPase-activating protein 2 (1275 aa).

Disordered stretches follow at residues 118 to 146, 213 to 238, 280 to 306, and 335 to 365; these read KYESTDSFPSSQPSRANSPQSDSYSSPYE, NTKRSHRSSEEPGASSPVTSPILKDS, SSFRRPITKPTPFNSDSNISIDPKDNN, and SSPRRKSISIVKPHGISSPKHSTNNLSSKSG. Positions 122–143 are enriched in polar residues; that stretch reads TDSFPSSQPSRANSPQSDSYSS. Polar residues-rich tracts occupy residues 290–299 and 353–364; these read TPFNSDSNIS and PKHSTNNLSSKS. Ser388 is subject to Phosphoserine. Disordered regions lie at residues 390-466 and 539-561; these read IIEN…RSSF and FSKSKSHNHHPSSQVEKSTSNSK. Composition is skewed to polar residues over residues 450 to 466 and 552 to 561; these read SLSLQKTGSSDTRRSSF and QVEKSTSNSK. The 118-residue stretch at 719-836 folds into the PH domain; sequence HAQKEGVLLK…WLRAILRQVP (118 aa). The span at 957-971 shows a compositional bias: basic and acidic residues; sequence ADTRRNQDAPEKHVP. 2 disordered regions span residues 957 to 988 and 1254 to 1275; these read ADTRRNQDAPEKHVPVIEIQSSRPSLEKTDQS and NGAQNESDSDVSDDNGEDNEFF. Residues 1065–1275 form the Rho-GAP domain; it reads LPLNEAVNIS…DDNGEDNEFF (211 aa). A compositionally biased stretch (acidic residues) spans 1260 to 1275; the sequence is SDSDVSDDNGEDNEFF.

It localises to the nucleus. Its function is as follows. GTPase-activating protein for Rho-type proteins. This Schizosaccharomyces pombe (strain 972 / ATCC 24843) (Fission yeast) protein is Probable Rho-type GTPase-activating protein 2 (rga2).